A 437-amino-acid chain; its full sequence is Cytochrome b (437 aa).

A helical transmembrane segment spans residues 45–65 (WIWGIVLAFTLVLQIVTGIVL). The heme b site is built by His-97 and His-111. 9 helical membrane passes run 100–120 (GASL…YYGS), 129–149 (WIVG…GYVL), 156–176 (FWGA…GPSI), 194–214 (FFSL…IHIW), 248–268 (FVIK…AVVA), 298–318 (FLPF…VILV), 330–350 (FFGV…PWLD), 365–385 (MWFW…AMPT), and 391–411 (WISL…LPLL). 2 residues coordinate heme b: His-198 and His-212.

It belongs to the cytochrome b family. The main subunits of complex b-c1 are: cytochrome b, cytochrome c1 and the Rieske protein. The cofactor is heme b.

The protein localises to the cell membrane. In terms of biological role, component of the ubiquinol-cytochrome c reductase complex (complex III or cytochrome b-c1 complex), which is a respiratory chain that generates an electrochemical potential coupled to ATP synthesis. The chain is Cytochrome b (petB) from Rhodobacter capsulatus (strain ATCC BAA-309 / NBRC 16581 / SB1003).